The sequence spans 153 residues: uncharacterized protein (153 aa).

An N-terminal signal peptide occupies residues 1 to 19 (MRKYIPLVLFIFSWPVLCA). Active-site residues include arginine 46, glutamate 54, and arginine 88.

The protein belongs to the thermonuclease family.

This is an uncharacterized protein from Escherichia coli.